The chain runs to 206 residues: Ribosomal RNA small subunit methyltransferase G (206 aa).

Residues glycine 73, leucine 78, 124-125 (VE), and arginine 139 each bind S-adenosyl-L-methionine.

The protein belongs to the methyltransferase superfamily. RNA methyltransferase RsmG family.

The protein resides in the cytoplasm. The enzyme catalyses guanosine(527) in 16S rRNA + S-adenosyl-L-methionine = N(7)-methylguanosine(527) in 16S rRNA + S-adenosyl-L-homocysteine. Functionally, specifically methylates the N7 position of guanine in position 527 of 16S rRNA. This is Ribosomal RNA small subunit methyltransferase G from Yersinia enterocolitica serotype O:8 / biotype 1B (strain NCTC 13174 / 8081).